A 985-amino-acid chain; its full sequence is MVFQPISEFLLIRNAGMSMYFNKIISFNIISRIVICIFLICGMFMAGASEKYDANAPQQVQPYSVSSSAFENLHPNNEMESSINPFSASDTERNAAIIDRANKEQETEAVNKMISTGARLAASGRASDVAHSMVGDAVNQEIKQWLNRFGTAQVNLNFDKNFSLKESSLDWLAPWYDSASFLFFSQLGIRNKDSRNTLNLGVGIRTLENGWLYGLNTFYDNDLTGHNHRIGLGAEAWTDYLQLAANGYFRLNGWHSSRDFSDYKERPATGGDLRANAYLPALPQLGGKLMYEQYTGERVALFGKDNLQRNPYAVTAGINYTPVPLLTVGVDQRMGKSSKHETQWNLQMNYRLGESFQSQLSPSAVAGTRLLAESRYNLVDRNNNIVLEYQKQQVVKLTLSPATISGLPGQVYQVNAQVQGASAVREIVWSDAELIAAGGTLTPLSTTQFNLVLPPYKRTAQVSRVTDDLTANFYSLSALAVDHQGNRSNSFTLSVTVQQPQLTLTAAVIGDGAPANGKTAITVEFTVADFEGKPLAGQEVVITTNNGALPNKITEKTDANGVARIALTNTTDGVTVVTAEVEGQRQSVDTHFVKGTIAADKSTLAAVPTSIIADGLMASTITLELKDTYGDPQAGANVAFDTTLGNMGVITDHNDGTYSAPLTSTTLGVATVTVKVDGAAFSVPSVTVNFTADPIPDAGRSSFTVSTPDILADGTMSSTLSFVPVDKNGHFISGMQGLSFTQNGVPVSISPITEQPDSYTATVVGNTAGDVTITPQVDTLILSTLQKKISLFPVPTLTGILVNGQNFATDKGFPKTIFKNATFQLQMDNDVANNTQYEWSSSFTPNVSVNDQGQVTITYQTYSEVAVTAKSKKFPSYSVSYRFYPNRWIYDGGTSLVSSLEASRQCQGSDMSAVLESSRATNGTRAPDGTLWGEWGSLTAYSSDWQSGEYWVKKTSTDFETMNMDTGALVQGPAYLAFPLCALAI.

Positions 494-594 (SVTVQQPQLT…RQSVDTHFVK (101 aa)) are D1. The Extracellular portion of the chain corresponds to 494–985 (SVTVQQPQLT…LAFPLCALAI (492 aa)). 2 consecutive Big-1 domains span residues 503 to 594 (TLTA…HFVK) and 601 to 691 (KSTL…VNFT). Residues 595–694 (GTIAADKSTL…SVTVNFTADP (100 aa)) are D2. The segment at 695 to 794 (IPDAGRSSFT…LQKKISLFPV (100 aa)) is D3. Residues 795–886 (PTLTGILVNG…YSVSYRFYPN (92 aa)) are D4. The tract at residues 795-985 (PTLTGILVNG…LAFPLCALAI (191 aa)) is integrin-binding. The interval 887-985 (RWIYDGGTSL…LAFPLCALAI (99 aa)) is D5. Cys906 and Cys981 form a disulfide bridge.

It belongs to the intimin/invasin family.

It localises to the cell surface. Its function is as follows. Invasin is a protein that allows enteric bacteria to penetrate cultured mammalian cells. The entry of invasin in the cell is mediated by binding several beta-1 chain integrins. This is Invasin from Yersinia pseudotuberculosis serotype I (strain IP32953).